Reading from the N-terminus, the 122-residue chain is Small ribosomal subunit protein uS13 (122 aa).

The segment at 95–122 (GLPVRGQKTKTNARTRKGPKRTVANKKK) is disordered.

Belongs to the universal ribosomal protein uS13 family. Part of the 30S ribosomal subunit. Forms a loose heterodimer with protein S19. Forms two bridges to the 50S subunit in the 70S ribosome.

Functionally, located at the top of the head of the 30S subunit, it contacts several helices of the 16S rRNA. In the 70S ribosome it contacts the 23S rRNA (bridge B1a) and protein L5 of the 50S subunit (bridge B1b), connecting the 2 subunits; these bridges are implicated in subunit movement. Contacts the tRNAs in the A and P-sites. This is Small ribosomal subunit protein uS13 from Lachnoclostridium phytofermentans (strain ATCC 700394 / DSM 18823 / ISDg) (Clostridium phytofermentans).